Reading from the N-terminus, the 251-residue chain is MLLLISPDSVEEALDCAKAAEHLDIVDVKKPDEGSLGANFPWVIREIRDAVPADKPVSATVGDVPYKPGTVAQAALGAVVSGATYIKVGLYGCTTPDQGIEVMRAVVRAVKDHRPDALVVASGYADAHRIGCVNPLAVPDIAARSGADAAMLDTAIKDGTRLFDHVPPEVCAEFVRLAHTSGLLAALAGSVTQADLGPLTHMGTDIVGVRGAVCEGGDRNAGRIQPHLVAAFRAEMDRHAREHAVGVPAVN.

Catalysis depends on K29, which acts as the Schiff-base intermediate with substrate. The Proton acceptor role is filled by K87.

The protein belongs to the MfnB family.

It catalyses the reaction 2 D-glyceraldehyde 3-phosphate = 4-(hydroxymethyl)-2-furancarboxaldehyde phosphate + phosphate + 2 H2O. Functionally, catalyzes the formation of 4-(hydroxymethyl)-2-furancarboxaldehyde phosphate (4-HFC-P) from two molecules of glyceraldehyde-3-P (GA-3-P). The polypeptide is Putative (5-formylfuran-3-yl)methyl phosphate synthase (Kitasatospora aureofaciens (Streptomyces aureofaciens)).